The chain runs to 355 residues: Elongation factor Ts, mitochondrial (355 aa).

A mitochondrion-targeting transit peptide spans 1–46 (MIRSLNFALRNCNKNILINSNKITINNGLLLKKNNFCTQSTSEVKV).

The protein belongs to the EF-Ts family.

The protein resides in the mitochondrion. Associates with the EF-Tu.GDP complex and induces the exchange of GDP to GTP. It remains bound to the aminoacyl-tRNA.EF-Tu.GTP complex up to the GTP hydrolysis stage on the ribosome. This is Elongation factor Ts, mitochondrial (tsfm) from Dictyostelium discoideum (Social amoeba).